Here is a 542-residue protein sequence, read N- to C-terminus: Chaperonin GroEL 2 (542 aa).

Residues 30–33, lysine 51, 87–91, glycine 415, and aspartate 495 contribute to the ATP site; these read TLGP and DGTTT.

The protein belongs to the chaperonin (HSP60) family. In terms of assembly, forms a cylinder of 14 subunits composed of two heptameric rings stacked back-to-back. Interacts with the co-chaperonin GroES.

The protein localises to the cytoplasm. The catalysed reaction is ATP + H2O + a folded polypeptide = ADP + phosphate + an unfolded polypeptide.. Functionally, together with its co-chaperonin GroES, plays an essential role in assisting protein folding. The GroEL-GroES system forms a nano-cage that allows encapsulation of the non-native substrate proteins and provides a physical environment optimized to promote and accelerate protein folding. This Methylococcus capsulatus (strain ATCC 33009 / NCIMB 11132 / Bath) protein is Chaperonin GroEL 2.